We begin with the raw amino-acid sequence, 218 residues long: Protein-methionine-sulfoxide reductase heme-binding subunit MsrQ (218 aa).

Helical transmembrane passes span 12 to 32 (TLIKSMLFIAALLPFGRLALF), 82 to 102 (MLGLFAFFYACLHFTTFLWFD), 118 to 138 (PFITVGFSAFVLLIPLAITST), 150 to 170 (WQWLHRLVYVIAALGILHYWW), and 180 to 200 (QPIIFGTIVAVLLLVRVFWAW).

The protein belongs to the MsrQ family. Heterodimer of a catalytic subunit (MsrP) and a heme-binding subunit (MsrQ). The cofactor is FMN. Heme b is required as a cofactor.

It localises to the cell inner membrane. Its function is as follows. Part of the MsrPQ system that repairs oxidized periplasmic proteins containing methionine sulfoxide residues (Met-O), using respiratory chain electrons. Thus protects these proteins from oxidative-stress damage caused by reactive species of oxygen and chlorine generated by the host defense mechanisms. MsrPQ is essential for the maintenance of envelope integrity under bleach stress, rescuing a wide series of structurally unrelated periplasmic proteins from methionine oxidation. MsrQ provides electrons for reduction to the reductase catalytic subunit MsrP, using the quinone pool of the respiratory chain. The protein is Protein-methionine-sulfoxide reductase heme-binding subunit MsrQ of Herminiimonas arsenicoxydans.